Reading from the N-terminus, the 273-residue chain is Small ribosomal subunit protein eS1 (273 aa).

This sequence belongs to the eukaryotic ribosomal protein eS1 family. In terms of assembly, component of the small ribosomal subunit. Mature ribosomes consist of a small (40S) and a large (60S) subunit. The 40S subunit contains about 33 different proteins and 1 molecule of RNA (18S). The 60S subunit contains about 49 different proteins and 3 molecules of RNA (25S, 5.8S and 5S).

The protein localises to the cytoplasm. This chain is Small ribosomal subunit protein eS1 (rps3a), found in Dictyostelium discoideum (Social amoeba).